The primary structure comprises 396 residues: Endo-1,4-beta-xylanase A (396 aa).

The first 28 residues, 1 to 28 (MITLFRKPFVAGLAISLLVGGGIGNVAA), serve as a signal peptide directing secretion. The GH10 domain occupies 51–396 (AWQVASLSER…VKPAYWRIID (346 aa)). Glutamate 195 functions as the Proton donor in the catalytic mechanism. Glutamate 301 functions as the Nucleophile in the catalytic mechanism.

The protein belongs to the glycosyl hydrolase 10 (cellulase F) family.

It is found in the secreted. The catalysed reaction is Endohydrolysis of (1-&gt;4)-beta-D-xylosidic linkages in xylans.. It participates in glycan degradation; xylan degradation. In Halalkalibacterium halodurans (strain ATCC BAA-125 / DSM 18197 / FERM 7344 / JCM 9153 / C-125) (Bacillus halodurans), this protein is Endo-1,4-beta-xylanase A (xynA).